The following is a 341-amino-acid chain: Long-chain acyl-[acyl-carrier-protein] reductase (341 aa).

It belongs to the short-chain dehydrogenases/reductases (SDR) family. The cofactor is a divalent metal cation.

It catalyses the reaction a long-chain fatty aldehyde + holo-[ACP] + NADP(+) = a long-chain fatty acyl-[ACP] + NADPH + H(+). It carries out the reaction a long-chain fatty aldehyde + holo-[ACP] + NAD(+) = a long-chain fatty acyl-[ACP] + NADH + H(+). Functionally, catalyzes the NADP-dependent reduction of long-chain acyl-ACP to the corresponding fatty aldehyde. Involved in the biosynthesis of alkanes, mainly heptadecane and pentadecane, by producing the fatty aldehydes used by aldehyde decarbonylase. The chain is Long-chain acyl-[acyl-carrier-protein] reductase from Synechococcus elongatus (strain ATCC 33912 / PCC 7942 / FACHB-805) (Anacystis nidulans R2).